The primary structure comprises 331 residues: Tetraacyldisaccharide 4'-kinase (331 aa).

58-65 contributes to the ATP binding site; that stretch reads TVGGSGKT.

Belongs to the LpxK family.

It catalyses the reaction a lipid A disaccharide + ATP = a lipid IVA + ADP + H(+). Its pathway is glycolipid biosynthesis; lipid IV(A) biosynthesis; lipid IV(A) from (3R)-3-hydroxytetradecanoyl-[acyl-carrier-protein] and UDP-N-acetyl-alpha-D-glucosamine: step 6/6. In terms of biological role, transfers the gamma-phosphate of ATP to the 4'-position of a tetraacyldisaccharide 1-phosphate intermediate (termed DS-1-P) to form tetraacyldisaccharide 1,4'-bis-phosphate (lipid IVA). The polypeptide is Tetraacyldisaccharide 4'-kinase (Shewanella denitrificans (strain OS217 / ATCC BAA-1090 / DSM 15013)).